The chain runs to 379 residues: Eukaryotic translation initiation factor 3 subunit H (379 aa).

The region spanning 17-170 (VQIDSLVVMK…IRAYRLSTKA (154 aa)) is the MPN domain. Residues 280–291 (RQAENEQREARG) are compositionally biased toward basic and acidic residues. The tract at residues 280 to 300 (RQAENEQREARGEPPLSFDDI) is disordered.

The protein belongs to the eIF-3 subunit H family. Component of the eukaryotic translation initiation factor 3 (eIF-3) complex.

Its subcellular location is the cytoplasm. Its function is as follows. Component of the eukaryotic translation initiation factor 3 (eIF-3) complex, which is involved in protein synthesis of a specialized repertoire of mRNAs and, together with other initiation factors, stimulates binding of mRNA and methionyl-tRNAi to the 40S ribosome. The eIF-3 complex specifically targets and initiates translation of a subset of mRNAs involved in cell proliferation. The polypeptide is Eukaryotic translation initiation factor 3 subunit H (Brugia malayi (Filarial nematode worm)).